The chain runs to 229 residues: 1-(5-phosphoribosyl)-5-[(5-phosphoribosylamino)methylideneamino] imidazole-4-carboxamide isomerase (229 aa).

The active-site Proton acceptor is the Asp8. Asp125 acts as the Proton donor in catalysis.

The protein belongs to the HisA/HisF family.

Its subcellular location is the cytoplasm. The catalysed reaction is 1-(5-phospho-beta-D-ribosyl)-5-[(5-phospho-beta-D-ribosylamino)methylideneamino]imidazole-4-carboxamide = 5-[(5-phospho-1-deoxy-D-ribulos-1-ylimino)methylamino]-1-(5-phospho-beta-D-ribosyl)imidazole-4-carboxamide. Its pathway is amino-acid biosynthesis; L-histidine biosynthesis; L-histidine from 5-phospho-alpha-D-ribose 1-diphosphate: step 4/9. The chain is 1-(5-phosphoribosyl)-5-[(5-phosphoribosylamino)methylideneamino] imidazole-4-carboxamide isomerase from Thermococcus onnurineus (strain NA1).